Reading from the N-terminus, the 651-residue chain is LEAF RUST 10 DISEASE-RESISTANCE LOCUS RECEPTOR-LIKE PROTEIN KINASE-like 1.2 (651 aa).

The N-terminal stretch at 1–26 (MNPSTPSLLYTSIFFYFTIIATQTLS) is a signal peptide. The Extracellular portion of the chain corresponds to 27–264 (LDPKFKACEP…NDKRRRVIVK (238 aa)). Asn88, Asn114, Asn130, Asn136, Asn155, Asn193, and Asn213 each carry an N-linked (GlcNAc...) asparagine glycan. Residues 265-285 (VLIGASAAVVGLIAASIFWYV) traverse the membrane as a helical segment. The Cytoplasmic segment spans residues 286–651 (YHRRKTKSYR…DSVIVKWDSK (366 aa)). The 273-residue stretch at 341–613 (FDPSKELGDG…PCMSHVQDTL (273 aa)) folds into the Protein kinase domain. Residues 347–355 (LGDGGFGTV) and Lys369 contribute to the ATP site. Tyr415 carries the phosphotyrosine modification. The active-site Proton acceptor is the Asp465. Ser498 bears the Phosphoserine mark. Phosphothreonine occurs at positions 499 and 504. Tyr512 is modified (phosphotyrosine).

It belongs to the protein kinase superfamily. Ser/Thr protein kinase family.

It is found in the cell membrane. The protein resides in the membrane. The enzyme catalyses L-seryl-[protein] + ATP = O-phospho-L-seryl-[protein] + ADP + H(+). It catalyses the reaction L-threonyl-[protein] + ATP = O-phospho-L-threonyl-[protein] + ADP + H(+). Its function is as follows. Probable receptor-like serine/threonine-protein kinase involved in abscisic acid (ABA) signaling. Acts as a positive regulator of abiotic stress response. The chain is LEAF RUST 10 DISEASE-RESISTANCE LOCUS RECEPTOR-LIKE PROTEIN KINASE-like 1.2 from Arabidopsis thaliana (Mouse-ear cress).